Consider the following 143-residue polypeptide: Transcriptional regulator MraZ (143 aa).

SpoVT-AbrB domains follow at residues 5 to 47 and 76 to 119; these read SHTP…PLAE and ASDD…DSQR.

Belongs to the MraZ family. In terms of assembly, forms oligomers.

The protein resides in the cytoplasm. The protein localises to the nucleoid. The protein is Transcriptional regulator MraZ of Parafrankia sp. (strain EAN1pec).